The primary structure comprises 134 residues: Ribosome-binding factor A (134 aa).

It belongs to the RbfA family. As to quaternary structure, monomer. Binds 30S ribosomal subunits, but not 50S ribosomal subunits or 70S ribosomes.

It is found in the cytoplasm. One of several proteins that assist in the late maturation steps of the functional core of the 30S ribosomal subunit. Associates with free 30S ribosomal subunits (but not with 30S subunits that are part of 70S ribosomes or polysomes). Required for efficient processing of 16S rRNA. May interact with the 5'-terminal helix region of 16S rRNA. This Rhizobium johnstonii (strain DSM 114642 / LMG 32736 / 3841) (Rhizobium leguminosarum bv. viciae) protein is Ribosome-binding factor A.